Here is a 163-residue protein sequence, read N- to C-terminus: CASP-like protein 1C3 (163 aa).

Residues 1 to 6 (MAKIKK) are Cytoplasmic-facing. Residues 7 to 27 (IFTNFLRLLALAATVVAIVFM) form a helical membrane-spanning segment. The Extracellular segment spans residues 28-52 (VTSHDSAQVLNLTFTVKYSNTPVFK). Asn38 carries N-linked (GlcNAc...) asparagine glycosylation. Residues 53–73 (YFVIAEAIAGGYIVISILLSF) form a helical membrane-spanning segment. Residues 74–79 (KSLFWR) lie on the Cytoplasmic side of the membrane. The helical transmembrane segment at 80–100 (LLVILDMVTAVLLTSSISAAL) threads the bilayer. The Extracellular portion of the chain corresponds to 101 to 128 (AIAQVGKKGNTHAGWLPVCEQVPDFCDQ). The chain crosses the membrane as a helical span at residues 129–149 (VTIALIAGFAAAIIYFVLLLC). The Cytoplasmic portion of the chain corresponds to 150–163 (SLYVVLSPIFVVTP).

This sequence belongs to the Casparian strip membrane proteins (CASP) family. Homodimer and heterodimers.

The protein resides in the cell membrane. The chain is CASP-like protein 1C3 from Populus trichocarpa (Western balsam poplar).